The sequence spans 127 residues: NADPH-dependent 7-cyano-7-deazaguanine reductase (127 aa).

The Thioimide intermediate role is filled by Cys-40. Asp-47 serves as the catalytic Proton donor. Substrate is bound by residues 62 to 64 (VEL) and 81 to 82 (HE).

It belongs to the GTP cyclohydrolase I family. QueF type 1 subfamily.

It is found in the cytoplasm. The enzyme catalyses 7-aminomethyl-7-carbaguanine + 2 NADP(+) = 7-cyano-7-deazaguanine + 2 NADPH + 3 H(+). It participates in tRNA modification; tRNA-queuosine biosynthesis. Functionally, catalyzes the NADPH-dependent reduction of 7-cyano-7-deazaguanine (preQ0) to 7-aminomethyl-7-deazaguanine (preQ1). This chain is NADPH-dependent 7-cyano-7-deazaguanine reductase, found in Campylobacter jejuni subsp. jejuni serotype O:2 (strain ATCC 700819 / NCTC 11168).